Reading from the N-terminus, the 151-residue chain is Phosphoribosyl-AMP cyclohydrolase (151 aa).

Residues 1–13 (MMTLTFASPPQNK) show a composition bias toward polar residues. A disordered region spans residues 1–20 (MMTLTFASPPQNKSDLETGP). Residue Asp-93 participates in Mg(2+) binding. A Zn(2+)-binding site is contributed by Cys-94. Mg(2+)-binding residues include Asp-95 and Asp-97. Zn(2+) is bound by residues Cys-112 and Cys-119.

This sequence belongs to the PRA-CH family. Homodimer. It depends on Mg(2+) as a cofactor. The cofactor is Zn(2+).

The protein localises to the cytoplasm. The catalysed reaction is 1-(5-phospho-beta-D-ribosyl)-5'-AMP + H2O = 1-(5-phospho-beta-D-ribosyl)-5-[(5-phospho-beta-D-ribosylamino)methylideneamino]imidazole-4-carboxamide. It participates in amino-acid biosynthesis; L-histidine biosynthesis; L-histidine from 5-phospho-alpha-D-ribose 1-diphosphate: step 3/9. In terms of biological role, catalyzes the hydrolysis of the adenine ring of phosphoribosyl-AMP. The polypeptide is Phosphoribosyl-AMP cyclohydrolase (Sinorhizobium medicae (strain WSM419) (Ensifer medicae)).